Here is a 440-residue protein sequence, read N- to C-terminus: 5-methylthioadenosine/S-adenosylhomocysteine deaminase (440 aa).

His-69 and His-71 together coordinate Zn(2+). Glu-98 and His-190 together coordinate substrate. His-217 lines the Zn(2+) pocket. The substrate site is built by Glu-220 and Asp-305. Residue Asp-305 participates in Zn(2+) binding.

The protein belongs to the metallo-dependent hydrolases superfamily. MTA/SAH deaminase family. Zn(2+) is required as a cofactor.

It catalyses the reaction S-adenosyl-L-homocysteine + H2O + H(+) = S-inosyl-L-homocysteine + NH4(+). It carries out the reaction S-methyl-5'-thioadenosine + H2O + H(+) = S-methyl-5'-thioinosine + NH4(+). Functionally, catalyzes the deamination of 5-methylthioadenosine and S-adenosyl-L-homocysteine into 5-methylthioinosine and S-inosyl-L-homocysteine, respectively. Is also able to deaminate adenosine. This Desulfovibrio desulfuricans (strain ATCC 27774 / DSM 6949 / MB) protein is 5-methylthioadenosine/S-adenosylhomocysteine deaminase.